Consider the following 335-residue polypeptide: Mitochondrial uncoupling protein 4C (335 aa).

Solcar repeat units lie at residues 34-125 (RNLF…FRRP), 137-229 (LKIY…SKRT), and 238-329 (EGLP…LRQW). A run of 6 helical transmembrane segments spans residues 40–57 (YVNT…VFPL), 100–118 (GFSA…RVVL), 138–157 (KIYM…QALA), 204–223 (GVGP…VGSY), 244–264 (FVSS…ADVI), and 304–323 (GLMP…WLSV).

The protein belongs to the mitochondrial carrier (TC 2.A.29) family.

Its subcellular location is the mitochondrion inner membrane. Functionally, mitochondrial protein that is likely to be responsible for thermogenic respiration. Likely to function in mitochondrial uncoupling i.e. creating mitochondrial proton leaks across the inner mitochondrial membrane and can therefore dissipate the mitochondrial proton gradient and convert the energy of substrate oxidation into heat instead of ATP. Involved in cold tolerance, it is required for development to the adult stage at low temperatures. This is Mitochondrial uncoupling protein 4C from Drosophila melanogaster (Fruit fly).